Here is a 187-residue protein sequence, read N- to C-terminus: Oleosin Zm-II (187 aa).

The residue at position 2 (alanine 2) is an N-acetylalanine. The segment at 2 to 51 (ADRDRSGIYGGAHATYGQQQQQGGGGRPMGEQVKKGMLHDKGPTASQALT) is polar. The disordered stretch occupies residues 17–42 (YGQQQQQGGGGRPMGEQVKKGMLHDK). Residues 33 to 42 (QVKKGMLHDK) show a composition bias toward basic and acidic residues. 3 consecutive transmembrane segments (helical) span residues 50-70 (LTVATLFPLGGLLLVLSGLAL), 83-103 (VFLIFSPVLVPAALLIGTAVM), and 104-124 (GFLTSGALGLGGLSSLTCLAN). Residues 52–123 (VATLFPLGGL…GGLSSLTCLA (72 aa)) are hydrophobic. Over residues 155–169 (TAQAGQAIQGRAQEA) the composition is skewed to low complexity. Residues 155 to 187 (TAQAGQAIQGRAQEAGTGGGAGAGAGGGGRASS) are disordered. A compositionally biased stretch (gly residues) spans 170-187 (GTGGGAGAGAGGGGRASS).

Belongs to the oleosin family. Post-translationally, the N-terminus is blocked. As to expression, found in embryonic axis, scutellum, and aleurone layer.

Its subcellular location is the lipid droplet. The protein resides in the membrane. Functionally, may have a structural role to stabilize the lipid body during desiccation of the seed by preventing coalescence of the oil. Probably interacts with both lipid and phospholipid moieties of lipid bodies. May also provide recognition signals for specific lipase anchorage in lipolysis during seedling growth. The polypeptide is Oleosin Zm-II (OLE18) (Zea mays (Maize)).